Consider the following 341-residue polypeptide: G2/mitotic-specific cyclin C13-1 (341 aa).

This sequence belongs to the cyclin family. Cyclin AB subfamily.

In terms of biological role, essential for the control of the cell cycle at the G2/M (mitosis) transition. Interacts with the CDC2 and CDK2 protein kinases to form MPF. G2/M cyclins accumulate steadily during G2 and are abruptly destroyed at mitosis. The polypeptide is G2/mitotic-specific cyclin C13-1 (Daucus carota (Wild carrot)).